Here is an 89-residue protein sequence, read N- to C-terminus: Small ribosomal subunit protein uS15c (89 aa).

The protein belongs to the universal ribosomal protein uS15 family. In terms of assembly, part of the 30S ribosomal subunit.

It is found in the plastid. The protein localises to the chloroplast. The protein is Small ribosomal subunit protein uS15c (rps15) of Chloranthus spicatus (Chulantree).